We begin with the raw amino-acid sequence, 234 residues long: Mannose/glucose-specific lectin Cramoll (234 aa).

Residues E8 and D10 each coordinate Mn(2+). Residues D10, Y12, N14, and D19 each contribute to the Ca(2+) site. Residue Y12 participates in a carbohydrate binding. Residues D19, H24, and S34 each contribute to the Mn(2+) site. An a carbohydrate-binding site is contributed by 99–100; that stretch reads LY. D205 serves as a coordination point for Ca(2+). Position 225 (R225) interacts with a carbohydrate.

Belongs to the leguminous lectin family. Homotetramer. The alpha and beta chains are produced by partial proteolytic processing of the lectin precursor by an asparaginyl endopeptidase.

Glucose/D-mannose specific lectin. This is Mannose/glucose-specific lectin Cramoll from Cratylia mollis (Camaratu bean).